A 360-amino-acid polypeptide reads, in one-letter code: Hydroxycarboxylic acid receptor 2 (360 aa).

The Extracellular segment spans residues 1 to 30; that stretch reads MSKQNHFLVINGKNCCVFRDENIAKVLPPV. The chain crosses the membrane as a helical span at residues 31-51; that stretch reads LGLEFVFGLLGNGLALWIFCF. Topologically, residues 52 to 60 are cytoplasmic; that stretch reads HLKSWKSSR. Residues 61-81 traverse the membrane as a helical segment; that stretch reads IFLFNLAVADFLLIICLPFLT. Over 82–98 the chain is Extracellular; that stretch reads DNYVQNWDWRFGSIPCR. Residues cysteine 97 and cysteine 174 are joined by a disulfide bond. Residues 99–119 form a helical membrane-spanning segment; the sequence is VMLFMLAMNRQGSIIFLTVVA. At 120–140 the chain is on the cytoplasmic side; it reads VDRYFRVVHPHHFLNKISNRT. The helical transmembrane segment at 141-161 threads the bilayer; sequence AAIISCFLWGITIGLTVHLLY. At 162-189 the chain is on the extracellular side; sequence TDMMTRNGDANLCSSFSICYTFRWHDAM. The helical transmembrane segment at 190 to 210 threads the bilayer; it reads FLLEFFLPLGIILFCSGRIIW. Topologically, residues 211–226 are cytoplasmic; the sequence is SLRQRQMDRHVKIKRA. Residues 227-247 form a helical membrane-spanning segment; it reads INFIMVVAIVFVICFLPSVAV. Residues 248-270 lie on the Extracellular side of the membrane; sequence RIRIFWLLYKHNVRNCDIYSSVD. The chain crosses the membrane as a helical span at residues 271–291; sequence LAFFTTLSFTYMNSMLDPVVY. The Cytoplasmic segment spans residues 292-360; the sequence is YFSSPSFPNF…SPPYLASTSR (69 aa). The interval 320–360 is disordered; the sequence is NNRSTSVELTGDPSTIRSIPGALMTDPSEPGSPPYLASTSR. Positions 321–336 are enriched in polar residues; the sequence is NRSTSVELTGDPSTIR. Position 325 is a phosphoserine (serine 325).

This sequence belongs to the G-protein coupled receptor 1 family. In terms of tissue distribution, expressed in adipose tissue, lung and spleen.

It localises to the cell membrane. In terms of biological role, acts as a high affinity receptor for both nicotinic acid (also known as niacin) and (D)-beta-hydroxybutyrate and mediates increased adiponectin secretion and decreased lipolysis through G(i)-protein-mediated inhibition of adenylyl cyclase. This pharmacological effect requires nicotinic acid doses that are much higher than those provided by a normal diet. Mediates nicotinic acid-induced apoptosis in mature neutrophils. Receptor activation by nicotinic acid results in reduced cAMP levels which may affect activity of cAMP-dependent protein kinase A and phosphorylation of target proteins, leading to neutrophil apoptosis. The rank order of potency for the displacement of nicotinic acid binding is 5-methyl pyrazole-3-carboxylic acid = pyridine-3-acetic acid &gt; acifran &gt; 5-methyl nicotinic acid = acipimox &gt;&gt; nicotinuric acid = nicotinamide. The polypeptide is Hydroxycarboxylic acid receptor 2 (Hcar2) (Rattus norvegicus (Rat)).